A 518-amino-acid polypeptide reads, in one-letter code: Glutamate--cysteine ligase (518 aa).

Belongs to the glutamate--cysteine ligase type 1 family. Type 1 subfamily.

The catalysed reaction is L-cysteine + L-glutamate + ATP = gamma-L-glutamyl-L-cysteine + ADP + phosphate + H(+). The protein operates within sulfur metabolism; glutathione biosynthesis; glutathione from L-cysteine and L-glutamate: step 1/2. This Escherichia fergusonii (strain ATCC 35469 / DSM 13698 / CCUG 18766 / IAM 14443 / JCM 21226 / LMG 7866 / NBRC 102419 / NCTC 12128 / CDC 0568-73) protein is Glutamate--cysteine ligase.